The following is a 250-amino-acid chain: Small ribosomal subunit protein uS3z (250 aa).

Positions 21–92 constitute a KH type-2 domain; it reads LNEVLTRELA…SVELYAEKVN (72 aa).

This sequence belongs to the universal ribosomal protein uS3 family. As to quaternary structure, interacts with SNRNP35.

This is Small ribosomal subunit protein uS3z (RPS3A) from Arabidopsis thaliana (Mouse-ear cress).